We begin with the raw amino-acid sequence, 356 residues long: Peptide chain release factor 1 (356 aa).

Residue Gln-234 is modified to N5-methylglutamine.

This sequence belongs to the prokaryotic/mitochondrial release factor family. Post-translationally, methylated by PrmC. Methylation increases the termination efficiency of RF1.

Its subcellular location is the cytoplasm. Its function is as follows. Peptide chain release factor 1 directs the termination of translation in response to the peptide chain termination codons UAG and UAA. This Exiguobacterium sp. (strain ATCC BAA-1283 / AT1b) protein is Peptide chain release factor 1.